The chain runs to 28 residues: Potassium channel toxin alpha-KTx 9.3 (28 aa).

Cystine bridges form between C3–C19, C6–C24, and C10–C26.

The protein belongs to the short scorpion toxin superfamily. Potassium channel inhibitor family. Alpha-KTx 09 subfamily. As to expression, expressed by the venom gland.

Its subcellular location is the secreted. In terms of biological role, inhibits voltage-gated potassium channels. The polypeptide is Potassium channel toxin alpha-KTx 9.3 (Aegaeobuthus nigrocinctus (Scorpion)).